A 475-amino-acid polypeptide reads, in one-letter code: Cytochrome P450 monooxygenase sthD (475 aa).

Positions 1–17 are cleaved as a signal peptide; it reads MAAYFLLGLYGSTLVYR. A helical transmembrane segment spans residues 276 to 296; that stretch reads FIIIAGSDTVAATLTFAFFYL. A glycan (N-linked (GlcNAc...) asparagine) is linked at Asn-336. Residue Cys-418 participates in heme binding.

It belongs to the cytochrome P450 family. Requires heme as cofactor.

It is found in the membrane. The enzyme catalyses betaenone A + NADPH + O2 + H(+) = stemphyloxin II + NADP(+) + H2O. It catalyses the reaction betaenone C + NADPH + O2 + H(+) = stemphyloxin I + NADP(+) + H2O. The protein operates within mycotoxin biosynthesis. In terms of biological role, cytochrome P450 monooxygenase; part of the gene cluster that mediates the biosynthesis of the phytotoxin stemphyloxin II. The first step of the pathway is the synthesis of dehydroprobetaenone I by the polyketide synthase sthA and the enoyl reductase sthE via condensation of one acetyl-CoA starter unit with 7 malonyl-CoA units and 5 methylations. The C-terminal reductase (R) domain of sthA catalyzes the reductive release of the polyketide chain. Because sthA lacks a designated enoylreductase (ER) domain, the required activity is provided the enoyl reductase sthE. The short-chain dehydrogenase/reductase sthC then catalyzes reduction of dehydroprobetaenone I to probetaenone I. The cytochrome P450 monooxygenase sthF catalyzes successive epoxidation, oxidation (resulting from epoxide opening) and hydroxylation to install a tertiary alcohol in the decaline ring to yield betaenone C from dehydroprobetaenone I and betaenone B from probetaenone I. The FAD-linked oxidoreductase sthB is responsible for the conversion of betaenone C to betaenone A via an intramolecular aldol reaction between C-1 and C-17 to form the bridged tricyclic system in betaenone A. Finally, the cytochrome P450 monooxygenase sthD catalyzes the hydroxylation of C-15 to afford the final metabolite stemphyloxin II. The polypeptide is Cytochrome P450 monooxygenase sthD (Phaeosphaeria nodorum (strain SN15 / ATCC MYA-4574 / FGSC 10173) (Glume blotch fungus)).